Reading from the N-terminus, the 303-residue chain is Probable cell division protein WhiA (303 aa).

Residues 272–303 (SIQQLADSLSTPLTKSGVNHRLRKINKIADEL) constitute a DNA-binding region (H-T-H motif).

It belongs to the WhiA family.

Its function is as follows. Involved in cell division and chromosome segregation. The protein is Probable cell division protein WhiA of Streptococcus pneumoniae (strain ATCC 700669 / Spain 23F-1).